Here is a 396-residue protein sequence, read N- to C-terminus: tRNA (guanine-N(7)-)-methyltransferase non-catalytic subunit wdr4 (396 aa).

4 WD repeats span residues 52 to 91 (HGSD…EKIS), 94 to 133 (WVSR…EQGR), 137 to 178 (GHLS…MSFC), and 180 to 220 (GHTE…EVHS).

It belongs to the WD repeat TRM82 family. Non-catalytic component of the METTL1-WDR4 complex, composed of mettl1 and wdr4.

It localises to the nucleus. It functions in the pathway tRNA modification; N(7)-methylguanine-tRNA biosynthesis. Its function is as follows. Non-catalytic component of the METTL1-WDR4 methyltransferase complex required for the formation of N(7)-methylguanine in a subset of RNA species, such as tRNAs, mRNAs and microRNAs (miRNAs). In the METTL1-WDR4 methyltransferase complex, wdr4 acts as a scaffold for tRNA-binding. Required for the formation of N(7)-methylguanine at position 46 (m7G46) in a large subset of tRNAs that contain the 5'-RAGGU-3' motif within the variable loop. M7G46 interacts with C13-G22 in the D-loop to stabilize tRNA tertiary structure and protect tRNAs from decay. Also required for the formation of N(7)-methylguanine at internal sites in a subset of mRNAs. Also required for methylation of a specific subset of miRNAs. The chain is tRNA (guanine-N(7)-)-methyltransferase non-catalytic subunit wdr4 (wdr4) from Xenopus laevis (African clawed frog).